A 457-amino-acid chain; its full sequence is MHIQSSQQNPSFVAELSQAVAGRLGQVEARQVATPREAQQLAQRQEAPKGEGLLSRLGAALARPFVAIIEWLGKLLGSRAHAATQAPLSRQDAPPAASLSAAEIKQMMLQKALPLTLGGLGKASELATLTAERLAKDHTRLASGDGALRSLATALVGIRDGSRIEASRTQAARLLEQSVGGIALQQWGTAGGAASQHVLSASPEQLREIAVQLHAVMDKVALLRHAVESEVKGEPVDKALADGLVEHFGLEAEQYLGEHPDGPYSDAEVMALGLYTNGEYQHLNRSLRQGRELDAGQALIDRGMSAAFEKSGPAEQVVKTFRGTQGRDAFEAVKEGQVGHDAGYLSTSRDPGVARSFAGQGTITTLFGRSGIDVSEISIEGDEQEILYDKGTDMRVLLSAKDGQGVTRRVLEEATLGERSGHGEGLLDALDLATGTDRSGKPQEQDLRLRMRGLDLA.

The Bacterial Rho-GAP domain occupies 99–232; that stretch reads LSAAEIKQMM…LRHAVESEVK (134 aa). In terms of domain architecture, TR mART core spans 242–418; it reads DGLVEHFGLE…RVLEEATLGE (177 aa). Active-site residues include Arg322, Ser346, and Glu385.

Interacts with chaperone protein SpcS; this interaction maintains ExoT in a secretion competent state within the cytoplasm. Interacts with host YWHAB.

The protein resides in the secreted. The catalysed reaction is L-arginyl-[protein] + NAD(+) = N(omega)-(ADP-D-ribosyl)-L-arginyl-[protein] + nicotinamide + H(+). In terms of biological role, bifunctional effector protein that is secreted and delivered by the type III secretion system into eukaryotic target cells. ADP-ribosylates several eukaryotic proteins including CT10 regulator of kinase (Crk) proteins. In turn, induces atypical anoikis apoptosis by transforming Crk adaptor protein into a cytotoxin. Affects host cell morphology by disrupting the actin cytoskeleton. In addition to this activity, acts via its N-terminal region as a GTPase-activating protein (GAP) for host Rho GTPases including RhoA, Rac1, Cdc42 and Ras. The bacterial Rho-GAP domain activity induces mitochondrial disruption in the target host cell by activating host caspases 3 and 9 that execute cellular death. This activity also causes stress fiber disassembly. The chain is Exoenzyme T (exoT) from Pseudomonas aeruginosa (strain ATCC 15692 / DSM 22644 / CIP 104116 / JCM 14847 / LMG 12228 / 1C / PRS 101 / PAO1).